Reading from the N-terminus, the 132-residue chain is Replication enhancer protein (132 aa).

Belongs to the geminiviridae replication enhancer protein family. In terms of assembly, homooligomer. Interacts with the replication-associated protein (REP). Interacts with host proliferating cell nuclear antigen (PCNA). Interacts with host retinoblastoma-related protein 1 (RBR1), and may thereby deregulate the host cell cycle. Oligomerization and interaction with PCNA are necessary for optimal replication enhancement.

In terms of biological role, increases viral DNA accumulation. Enhances infectivity and symptom expression. The chain is Replication enhancer protein from Tomato mottle virus (isolate Florida) (ToMoV).